We begin with the raw amino-acid sequence, 432 residues long: EF-hand calcium-binding domain-containing protein 3 (432 aa).

2 consecutive EF-hand domains span residues 45–80 (AQLEAFRNAYNFFTKDRTGCIDSHGLMSTVAKLGMN) and 81–116 (LNAYDIYNELKCADRDRDGKINFSDFIDVLTDKKLF). Residues aspartate 94, aspartate 96, aspartate 98, lysine 100, and aspartate 105 each coordinate Ca(2+). Tyrosine 273 bears the Phosphotyrosine mark. Residues 394–432 (NVNKTSPSNSGLSSPSDLSESDPETGRKRKRKSSRGFRQ) are disordered. Residues 399–411 (SPSNSGLSSPSDL) show a composition bias toward low complexity. Over residues 420–432 (RKRKRKSSRGFRQ) the composition is skewed to basic residues.

This Rattus norvegicus (Rat) protein is EF-hand calcium-binding domain-containing protein 3 (Efcab3).